The following is a 245-amino-acid chain: Fibroblast growth factor 3 (245 aa).

An N-terminal signal peptide occupies residues 1 to 17; sequence MGLIWLLLLSLLEPSWP. Asparagine 65 carries an N-linked (GlcNAc...) asparagine glycan. Disordered stretches follow at residues 137–181 and 195–245; these read GSSG…FLPR and QSSQ…LAVA. Positions 161 to 173 are enriched in basic residues; it reads GRPRRGFKTRRTQ. Polar residues predominate over residues 226–238; it reads TLSTRATPSTQLH.

Belongs to the heparin-binding growth factors family. As to quaternary structure, interacts with FGFR1 and FGFR2. Affinity between fibroblast growth factors (FGFs) and their receptors is increased by heparan sulfate glycosaminoglycans that function as coreceptors. Glycosylated.

The protein localises to the nucleus. It is found in the endoplasmic reticulum. Its subcellular location is the golgi apparatus. Its function is as follows. Plays an important role in the regulation of embryonic development, cell proliferation, and cell differentiation. Required for normal ear development. This Mus musculus (Mouse) protein is Fibroblast growth factor 3 (Fgf3).